A 248-amino-acid polypeptide reads, in one-letter code: MTRILILGGTGEARALAAALADVPGVEAVSSLAGRVRDPRLPVGDVRIGGFGGADGLAECVRAHPVDAIVDATHPFAAQITRNAADAAHRRGIPLVVLRRPEWSPRPGEHWHGAADLADAAELLPDLGTRIFLTIGRQGVDAFADLQALWFLIRAIDPPDVAMPPHSTLLLARGPFAVADETALMREHRIDVLVTKNSGGGQTDAKLDAARALGIPVLMIRRPPLPPATETVDDVAGAIAWVGTLTRR.

The protein belongs to the precorrin-6x reductase family.

It catalyses the reaction precorrin-6B + NADP(+) = precorrin-6A + NADPH + 2 H(+). It participates in cofactor biosynthesis; adenosylcobalamin biosynthesis; cob(II)yrinate a,c-diamide from precorrin-2 (aerobic route): step 6/10. In terms of biological role, catalyzes the reduction of the macrocycle of precorrin-6X into precorrin-6Y. In Rhodococcus erythropolis (Arthrobacter picolinophilus), this protein is Precorrin-6A reductase (cobK).